The chain runs to 70 residues: Small ribosomal subunit protein bS21 (70 aa).

The protein belongs to the bacterial ribosomal protein bS21 family.

The chain is Small ribosomal subunit protein bS21 from Wolinella succinogenes (strain ATCC 29543 / DSM 1740 / CCUG 13145 / JCM 31913 / LMG 7466 / NCTC 11488 / FDC 602W) (Vibrio succinogenes).